Here is a 200-residue protein sequence, read N- to C-terminus: MIGQLTGLVGQIEGERCIVDVNGVGYVVSASTRTLAVLPQPPSVARVLIETIVREDAIQLFGFATTDERDWFRLLTTVQSVGAKVALAILSANNPGELLLAINAGDKGSLTRAAGVGPRLADRILSELRNKVAKMPGGGGTVSAPGIVSGPSVENDALLALAGLGFRRAEAWPVLSKVLAENENATLDLAIRLSLKDLAR.

A domain I region spans residues 1 to 64 (MIGQLTGLVG…EDAIQLFGFA (64 aa)). The segment at 65-143 (TTDERDWFRL…KMPGGGGTVS (79 aa)) is domain II. A flexible linker region spans residues 144-148 (APGIV). The segment at 149–200 (SGPSVENDALLALAGLGFRRAEAWPVLSKVLAENENATLDLAIRLSLKDLAR) is domain III.

Belongs to the RuvA family. In terms of assembly, homotetramer. Forms an RuvA(8)-RuvB(12)-Holliday junction (HJ) complex. HJ DNA is sandwiched between 2 RuvA tetramers; dsDNA enters through RuvA and exits via RuvB. An RuvB hexamer assembles on each DNA strand where it exits the tetramer. Each RuvB hexamer is contacted by two RuvA subunits (via domain III) on 2 adjacent RuvB subunits; this complex drives branch migration. In the full resolvosome a probable DNA-RuvA(4)-RuvB(12)-RuvC(2) complex forms which resolves the HJ.

It localises to the cytoplasm. Functionally, the RuvA-RuvB-RuvC complex processes Holliday junction (HJ) DNA during genetic recombination and DNA repair, while the RuvA-RuvB complex plays an important role in the rescue of blocked DNA replication forks via replication fork reversal (RFR). RuvA specifically binds to HJ cruciform DNA, conferring on it an open structure. The RuvB hexamer acts as an ATP-dependent pump, pulling dsDNA into and through the RuvAB complex. HJ branch migration allows RuvC to scan DNA until it finds its consensus sequence, where it cleaves and resolves the cruciform DNA. This Gluconobacter oxydans (strain 621H) (Gluconobacter suboxydans) protein is Holliday junction branch migration complex subunit RuvA.